A 349-amino-acid polypeptide reads, in one-letter code: GDP-mannose:glycolipid 4-beta-D-mannosyltransferase (349 aa).

The signal sequence occupies residues 1 to 14 (MSASASLPVTRAAA).

Belongs to the glycosyltransferase 94 family.

The protein resides in the cell inner membrane. It carries out the reaction beta-D-GlcA-(1-&gt;2)-alpha-D-Man-(1-&gt;3)-beta-D-Glc-(1-&gt;4)-alpha-D-Glc-di-trans,octa-cis-undecaprenyl diphosphate + GDP-alpha-D-mannose = beta-D-Man-(1-&gt;4)-beta-D-GlcA-(1-&gt;2)-alpha-D-Man-(1-&gt;3)-beta-D-Glc-(1-&gt;4)-alpha-D-Glc-di-trans,octa-cis-undecaprenyl diphosphate + GDP + H(+). It functions in the pathway glycan biosynthesis; xanthan biosynthesis. Nonprocessive beta-mannosyltransferase that catalyzes the transfer of a mannose residue from GDP-mannose to glucuronic acid-beta-1,2-mannose-alpha-1,3-glucose-beta-1,4-glucose-PP-polyisoprenyl to form the lipid-linked pentasaccharide repeating unit of xanthan, Man-GlcA-Man-Glc(2)-PP-Pol. Is involved in the biosynthesis of the exopolysaccharide xanthan. The protein is GDP-mannose:glycolipid 4-beta-D-mannosyltransferase (gumI) of Xanthomonas campestris pv. campestris (strain ATCC 33913 / DSM 3586 / NCPPB 528 / LMG 568 / P 25).